The following is a 65-amino-acid chain: Large ribosomal subunit protein bL35 (65 aa).

The protein belongs to the bacterial ribosomal protein bL35 family.

This chain is Large ribosomal subunit protein bL35, found in Karelsulcia muelleri (strain GWSS) (Sulcia muelleri).